Reading from the N-terminus, the 443-residue chain is Signal recognition particle 54 kDa protein (443 aa).

Residues 104–111 (GLQGSGKT), 184–188 (DTAGR), and 242–245 (TKLD) each bind GTP.

It belongs to the GTP-binding SRP family. SRP54 subfamily. As to quaternary structure, part of the signal recognition particle protein translocation system, which is composed of SRP and FtsY. Archaeal SRP consists of a 7S RNA molecule of 300 nucleotides and two protein subunits: SRP54 and SRP19.

It localises to the cytoplasm. It catalyses the reaction GTP + H2O = GDP + phosphate + H(+). Involved in targeting and insertion of nascent membrane proteins into the cytoplasmic membrane. Binds to the hydrophobic signal sequence of the ribosome-nascent chain (RNC) as it emerges from the ribosomes. The SRP-RNC complex is then targeted to the cytoplasmic membrane where it interacts with the SRP receptor FtsY. This Methanosarcina barkeri (strain Fusaro / DSM 804) protein is Signal recognition particle 54 kDa protein.